The sequence spans 798 residues: Interphotoreceptor matrix proteoglycan 1 (798 aa).

The first 20 residues, 1 to 20 (MNLEIKHAILVLWIFLQVQG), serve as a signal peptide directing secretion. N142 carries N-linked (GlcNAc...) asparagine glycosylation. Residues 238-360 (SEEKVEFSIS…PEAYLTAADL (123 aa)) enclose the SEA 1 domain. 2 O-linked (GalNAc...) threonine glycosylation sites follow: T442 and T445. In terms of domain architecture, SEA 2 spans 574–687 (HELVVFFSLR…YSLDIEPADQ (114 aa)). 2 N-linked (GlcNAc...) asparagine glycosylation sites follow: N595 and N619. The Heparin- and hyaluronan-binding motif lies at 624-632 (KQLEILSFR). 2 N-linked (GlcNAc...) asparagine glycosylation sites follow: N633 and N651. Positions 741 to 798 (ASQGQATPCRPPDHSTNQARQPSVKKLQRQQNKVVKKRNSELSATDFEELDDQDWEGN) are disordered. Positions 786-798 (DFEELDDQDWEGN) are enriched in acidic residues.

Highly glycosylated (N- and O-linked carbohydrates and sialic acid).

Its subcellular location is the cell projection. It is found in the cilium. The protein resides in the photoreceptor outer segment. It localises to the secreted. The protein localises to the extracellular space. Its subcellular location is the extracellular matrix. It is found in the interphotoreceptor matrix. The protein resides in the photoreceptor inner segment. Chondroitin sulfate-, heparin- and hyaluronan-binding protein. May serve to form a basic macromolecular scaffold comprising the insoluble interphotoreceptor matrix. The sequence is that of Interphotoreceptor matrix proteoglycan 1 from Rattus norvegicus (Rat).